The chain runs to 113 residues: MTADNPNQGQIAEHAARQYLQQRGLIFVEQNVRYRFGEIDIVMKDGSDWVFVEVKYRSASQYGGAVNSLSAAQAGRIRKAASHYIQLNRIDAICRFDVIAADPQGIQWIRDAF.

It belongs to the UPF0102 family.

The protein is UPF0102 protein Shal_4069 of Shewanella halifaxensis (strain HAW-EB4).